The chain runs to 411 residues: Zinc-regulated GTPase metalloprotein activator 1 (411 aa).

The short motif at 9-16 is the psi-PxLVp motif element; that stretch reads SEIPQLVD. 68-75 serves as a coordination point for GTP; that stretch reads GFLGAGKT. Zn(2+)-binding residues include C127, C129, and C130. The short motif at 127–130 is the CXCC motif element; the sequence is CMCC. GTP contacts are provided by residues 130-134 and 218-221; these read CTVKD and NKTD. The CobW C-terminal domain occupies 307–411; sequence ISTHTFKLPP…RISPFVVGNQ (105 aa).

It belongs to the SIMIBI class G3E GTPase family. ZNG1 subfamily.

It catalyses the reaction GTP + H2O = GDP + phosphate + H(+). Zinc chaperone that directly transfers zinc cofactor to target metalloproteins, thereby activating them. Catalyzes zinc insertion into the active site of methionine aminopeptidase map1, which function to cleave the initiator methionine from polypeptides during or after protein translation. Mechanistically, the N-terminal psi-PxLVp motif binds to the C6H2-type zinc finger of inactive form of map1. After formation of the docked complex, zinc is transferred from the CXCC motif in the GTPase domain of zng1 to the zinc binding site in the peptidase domain of map1 in a process requiring GTP hydrolysis. GTP/GDP exchange is required for release of active map1. The polypeptide is Zinc-regulated GTPase metalloprotein activator 1 (zng1) (Schizosaccharomyces pombe (strain 972 / ATCC 24843) (Fission yeast)).